The following is a 485-amino-acid chain: Ribulose bisphosphate carboxylase large chain (485 aa).

The propeptide occupies 1–2 (MS). N-acetylproline is present on proline 3. Lysine 14 carries the N6,N6,N6-trimethyllysine modification. Residues asparagine 123 and threonine 173 each contribute to the substrate site. The active-site Proton acceptor is the lysine 175. Lysine 177 lines the substrate pocket. 3 residues coordinate Mg(2+): lysine 201, aspartate 203, and glutamate 204. Lysine 201 carries the post-translational modification N6-carboxylysine. Histidine 294 (proton acceptor) is an active-site residue. Positions 295, 327, and 379 each coordinate substrate.

It belongs to the RuBisCO large chain family. Type I subfamily. As to quaternary structure, heterohexadecamer of 8 large chains and 8 small chains; disulfide-linked. The disulfide link is formed within the large subunit homodimers. Mg(2+) is required as a cofactor. The disulfide bond which can form in the large chain dimeric partners within the hexadecamer appears to be associated with oxidative stress and protein turnover.

The protein resides in the plastid. It localises to the chloroplast. It catalyses the reaction 2 (2R)-3-phosphoglycerate + 2 H(+) = D-ribulose 1,5-bisphosphate + CO2 + H2O. The enzyme catalyses D-ribulose 1,5-bisphosphate + O2 = 2-phosphoglycolate + (2R)-3-phosphoglycerate + 2 H(+). Functionally, ruBisCO catalyzes two reactions: the carboxylation of D-ribulose 1,5-bisphosphate, the primary event in carbon dioxide fixation, as well as the oxidative fragmentation of the pentose substrate in the photorespiration process. Both reactions occur simultaneously and in competition at the same active site. This Flaveria pringlei protein is Ribulose bisphosphate carboxylase large chain.